A 501-amino-acid polypeptide reads, in one-letter code: Glutamyl-tRNA(Gln) amidotransferase subunit A (501 aa).

Residues K80 and S155 each act as charge relay system in the active site. Residue S179 is the Acyl-ester intermediate of the active site.

The protein belongs to the amidase family. GatA subfamily. Heterotrimer of A, B and C subunits.

It catalyses the reaction L-glutamyl-tRNA(Gln) + L-glutamine + ATP + H2O = L-glutaminyl-tRNA(Gln) + L-glutamate + ADP + phosphate + H(+). In terms of biological role, allows the formation of correctly charged Gln-tRNA(Gln) through the transamidation of misacylated Glu-tRNA(Gln) in organisms which lack glutaminyl-tRNA synthetase. The reaction takes place in the presence of glutamine and ATP through an activated gamma-phospho-Glu-tRNA(Gln). In Cupriavidus pinatubonensis (strain JMP 134 / LMG 1197) (Cupriavidus necator (strain JMP 134)), this protein is Glutamyl-tRNA(Gln) amidotransferase subunit A.